Reading from the N-terminus, the 185-residue chain is Large ribosomal subunit protein uL16m (185 aa).

It belongs to the universal ribosomal protein uL16 family.

It is found in the mitochondrion. The polypeptide is Large ribosomal subunit protein uL16m (RPL16) (Oryza sativa subsp. japonica (Rice)).